The following is a 394-amino-acid chain: Chalcone synthase 4 (394 aa).

Cys165 is an active-site residue.

This sequence belongs to the thiolase-like superfamily. Chalcone/stilbene synthases family.

It carries out the reaction (E)-4-coumaroyl-CoA + 3 malonyl-CoA + 3 H(+) = 2',4,4',6'-tetrahydroxychalcone + 3 CO2 + 4 CoA. The protein operates within secondary metabolite biosynthesis; flavonoid biosynthesis. In terms of biological role, the primary product of this enzyme is 4,2',4',6'-tetrahydroxychalcone (also termed naringenin-chalcone or chalcone) which can under specific conditions spontaneously isomerize into naringenin. The sequence is that of Chalcone synthase 4 (CHS4) from Bromheadia finlaysoniana (Orchid).